The sequence spans 203 residues: Dephospho-CoA kinase (203 aa).

The DPCK domain occupies 6–203 (KVAITGGLSC…ELYQELKIYI (198 aa)). 14-19 (SCGKSS) provides a ligand contact to ATP.

The protein belongs to the CoaE family.

Its subcellular location is the cytoplasm. It catalyses the reaction 3'-dephospho-CoA + ATP = ADP + CoA + H(+). It participates in cofactor biosynthesis; coenzyme A biosynthesis; CoA from (R)-pantothenate: step 5/5. Functionally, catalyzes the phosphorylation of the 3'-hydroxyl group of dephosphocoenzyme A to form coenzyme A. The protein is Dephospho-CoA kinase of Protochlamydia amoebophila (strain UWE25).